Consider the following 248-residue polypeptide: Pyridoxine 5'-phosphate synthase (248 aa).

N12 contacts 3-amino-2-oxopropyl phosphate. 14-15 (DH) contributes to the 1-deoxy-D-xylulose 5-phosphate binding site. R23 provides a ligand contact to 3-amino-2-oxopropyl phosphate. The Proton acceptor role is filled by H48. 1-deoxy-D-xylulose 5-phosphate-binding residues include R50 and H55. The Proton acceptor role is filled by E75. Residue T105 coordinates 1-deoxy-D-xylulose 5-phosphate. Catalysis depends on H196, which acts as the Proton donor. Residues G197 and 218-219 (GH) contribute to the 3-amino-2-oxopropyl phosphate site.

This sequence belongs to the PNP synthase family. In terms of assembly, homooctamer; tetramer of dimers.

It localises to the cytoplasm. It carries out the reaction 3-amino-2-oxopropyl phosphate + 1-deoxy-D-xylulose 5-phosphate = pyridoxine 5'-phosphate + phosphate + 2 H2O + H(+). It participates in cofactor biosynthesis; pyridoxine 5'-phosphate biosynthesis; pyridoxine 5'-phosphate from D-erythrose 4-phosphate: step 5/5. Functionally, catalyzes the complicated ring closure reaction between the two acyclic compounds 1-deoxy-D-xylulose-5-phosphate (DXP) and 3-amino-2-oxopropyl phosphate (1-amino-acetone-3-phosphate or AAP) to form pyridoxine 5'-phosphate (PNP) and inorganic phosphate. In Pseudomonas aeruginosa (strain LESB58), this protein is Pyridoxine 5'-phosphate synthase.